Here is a 736-residue protein sequence, read N- to C-terminus: Subtilisin-like protease SBT4.6 (736 aa).

A signal peptide spans 1 to 24 (MATAVSYCLLSCIFALLVVSFASA). Positions 25-111 (GKDDQDKQVY…VFPSKNLNLQ (87 aa)) are cleaved as a propeptide — activation peptide. Residues 33-110 (VYIVYMGALP…SVFPSKNLNL (78 aa)) form the Inhibitor I9 domain. Residues 115–589 (SWNFMGLKEG…AGHVDPIAAI (475 aa)) form the Peptidase S8 domain. The active-site Charge relay system is the D143. N174 carries N-linked (GlcNAc...) asparagine glycosylation. H204 (charge relay system) is an active-site residue. A glycan (N-linked (GlcNAc...) asparagine) is linked at N227. The 81-residue stretch at 362 to 442 (KYPLVYGKSA…PVSVLSEDDY (81 aa)) folds into the PA domain. A glycan (N-linked (GlcNAc...) asparagine) is linked at N450. The active-site Charge relay system is S527. N564, N598, N610, and N668 each carry an N-linked (GlcNAc...) asparagine glycan.

The protein belongs to the peptidase S8 family. Post-translationally, the C-terminal propeptide is autocleaved.

It is found in the secreted. This Arabidopsis thaliana (Mouse-ear cress) protein is Subtilisin-like protease SBT4.6.